A 253-amino-acid polypeptide reads, in one-letter code: Imidazole glycerol phosphate synthase subunit HisF (253 aa).

Active-site residues include aspartate 11 and aspartate 130.

The protein belongs to the HisA/HisF family. In terms of assembly, heterodimer of HisH and HisF.

It localises to the cytoplasm. The enzyme catalyses 5-[(5-phospho-1-deoxy-D-ribulos-1-ylimino)methylamino]-1-(5-phospho-beta-D-ribosyl)imidazole-4-carboxamide + L-glutamine = D-erythro-1-(imidazol-4-yl)glycerol 3-phosphate + 5-amino-1-(5-phospho-beta-D-ribosyl)imidazole-4-carboxamide + L-glutamate + H(+). Its pathway is amino-acid biosynthesis; L-histidine biosynthesis; L-histidine from 5-phospho-alpha-D-ribose 1-diphosphate: step 5/9. In terms of biological role, IGPS catalyzes the conversion of PRFAR and glutamine to IGP, AICAR and glutamate. The HisF subunit catalyzes the cyclization activity that produces IGP and AICAR from PRFAR using the ammonia provided by the HisH subunit. This chain is Imidazole glycerol phosphate synthase subunit HisF, found in Dinoroseobacter shibae (strain DSM 16493 / NCIMB 14021 / DFL 12).